Reading from the N-terminus, the 333-residue chain is Protoheme IX farnesyltransferase (333 aa).

The next 7 helical transmembrane spans lie at 64–84 (LICTLGGGALAAAAAGALNCL), 110–130 (TVFLAAVSCTLAASMLLVSGV), 133–153 (LAAGLTLLGLFSYVILYTVIL), 161–181 (IVFGGVAGAIPPLVGASAATG), 189–209 (WLFGLVMLWTPAHFWALAILL), 246–266 (IMGVFALPEGGLLYGIMLLPF), and 287–307 (AKSLFRWSILYMFGICLLLLI).

It belongs to the UbiA prenyltransferase family. Protoheme IX farnesyltransferase subfamily.

The protein resides in the cell inner membrane. The catalysed reaction is heme b + (2E,6E)-farnesyl diphosphate + H2O = Fe(II)-heme o + diphosphate. The protein operates within porphyrin-containing compound metabolism; heme O biosynthesis; heme O from protoheme: step 1/1. Functionally, converts heme B (protoheme IX) to heme O by substitution of the vinyl group on carbon 2 of heme B porphyrin ring with a hydroxyethyl farnesyl side group. The chain is Protoheme IX farnesyltransferase from Prochlorococcus marinus (strain MIT 9215).